We begin with the raw amino-acid sequence, 72 residues long: uncharacterized protein (72 aa).

Positions 51–72 (AKGGRQKGEVVGVDDQCKEHKE) are disordered.

This sequence belongs to the YiiE family.

This is an uncharacterized protein from Escherichia coli O157:H7.